The chain runs to 444 residues: Argininosuccinate synthase (444 aa).

Residues 18 to 26 (AFSGGLDTS) and Ala-44 each bind ATP. L-citrulline is bound at residue Tyr-100. ATP is bound by residues Gly-130 and Thr-132. L-aspartate contacts are provided by Thr-132, Asn-136, and Asp-137. Residue Asn-136 coordinates L-citrulline. Asp-137 contacts ATP. Residues Arg-140 and Ser-193 each coordinate L-citrulline. Asp-195 contributes to the ATP binding site. Residues Thr-202, Glu-204, and Glu-281 each coordinate L-citrulline.

It belongs to the argininosuccinate synthase family. Type 2 subfamily. Homotetramer.

It is found in the cytoplasm. The catalysed reaction is L-citrulline + L-aspartate + ATP = 2-(N(omega)-L-arginino)succinate + AMP + diphosphate + H(+). The protein operates within amino-acid biosynthesis; L-arginine biosynthesis; L-arginine from L-ornithine and carbamoyl phosphate: step 2/3. In Histophilus somni (strain 129Pt) (Haemophilus somnus), this protein is Argininosuccinate synthase.